The primary structure comprises 249 residues: Phosphomannomutase 2 (249 aa).

The active-site Nucleophile is the Asp-12. Positions 12 and 14 each coordinate Mg(2+). Residue Asp-14 is the Proton donor/acceptor of the active site. Alpha-D-mannose 1-phosphate contacts are provided by Arg-21, Arg-123, Arg-134, Arg-141, Ser-179, and Asp-181. Position 209 (Asp-209) interacts with Mg(2+).

It belongs to the eukaryotic PMM family. In terms of assembly, homodimer.

The protein resides in the cytoplasm. The catalysed reaction is alpha-D-mannose 1-phosphate = D-mannose 6-phosphate. Its pathway is nucleotide-sugar biosynthesis; GDP-alpha-D-mannose biosynthesis; alpha-D-mannose 1-phosphate from D-fructose 6-phosphate: step 2/2. Involved in the synthesis of the GDP-mannose and dolichol-phosphate-mannose required for a number of critical mannosyl transfer reactions. In Dictyostelium discoideum (Social amoeba), this protein is Phosphomannomutase 2 (pmmB).